A 188-amino-acid chain; its full sequence is Inosine triphosphate pyrophosphatase (188 aa).

9 to 14 serves as a coordination point for ITP; that stretch reads TGNAKK. Glu39 provides a ligand contact to Mg(2+). Residues Lys51, 67–68, Lys84, 143–146, Lys166, and 171–172 each bind ITP; these read DT, FGWD, and HR.

Belongs to the HAM1 NTPase family. As to quaternary structure, homodimer. Requires Mg(2+) as cofactor. Mn(2+) serves as cofactor.

Its subcellular location is the cytoplasm. The catalysed reaction is ITP + H2O = IMP + diphosphate + H(+). The enzyme catalyses dITP + H2O = dIMP + diphosphate + H(+). It catalyses the reaction XTP + H2O = XMP + diphosphate + H(+). In terms of biological role, pyrophosphatase that hydrolyzes non-canonical purine nucleotides such as inosine triphosphate (ITP), deoxyinosine triphosphate (dITP) or xanthosine 5'-triphosphate (XTP) to their respective monophosphate derivatives. The enzyme does not distinguish between the deoxy- and ribose forms. Probably excludes non-canonical purines from RNA and DNA precursor pools, thus preventing their incorporation into RNA and DNA and avoiding chromosomal lesions. This chain is Inosine triphosphate pyrophosphatase, found in Anopheles gambiae (African malaria mosquito).